The following is a 568-amino-acid chain: Phosphoprotein (568 aa).

The segment at 1-24 is disordered; it reads MDQDAFFFERDPEAEGEAPRKQES. A compositionally biased stretch (basic and acidic residues) spans 7-24; it reads FFERDPEAEGEAPRKQES. An N0 binding region spans residues 33 to 41; that stretch reads DVVLSYKPT. The interval 45–324 is disordered; that stretch reads EDRSWLHNII…SNEEGTSNTS (280 aa). 3 stretches are compositionally biased toward basic and acidic residues: residues 56–105, 129–144, and 151–167; these read NPKE…HARI, GDERNTRIDEDSPNER, and PTDEDRKMAENSNKREE. A compositionally biased stretch (polar residues) spans 179–216; the sequence is GSTSLSDDGEGRTNNNGRSMETSSTHSTRITDVITNPS. The segment covering 239 to 253 has biased composition (basic and acidic residues); it reads TRSERTQNSELHKST. Low complexity predominate over residues 295–304; it reads TTNNANNNAK. Residues 344–411 are multimerization; the sequence is FELSRRASHQ…SSRDLHKRFS (68 aa). The stretch at 387–416 forms a coiled coil; sequence EENRTLLKQIQEEIDSSRDLHKRFSEYQKE. Residues 412–445 form a l protein binding region; the sequence is EYQKEQNSLMMANLSTLHIITDRGGKTGDPSDTT. Disordered stretches follow at residues 434-455 and 493-513; these read RGGKTGDPSDTTRSPSVFTKGK and PVLEEHNNEPQASNASRLIPS. The span at 441-450 shows a compositional bias: polar residues; the sequence is PSDTTRSPSV. The interval 479 to 568 is interaction with the nucleocapsid (N-RNA); that stretch reads DLIREDELRE…FEEDIDSLTN (90 aa).

It belongs to the respirovirus P protein family. As to quaternary structure, homotetramer. Interacts (via multimerization domain) with polymerase L; this interaction forms the polymerase complex. Interacts (via N-terminus) with N0; this interaction allows P to chaperon N0 before encapsidation and form the N-P complex. Interacts (via C-terminus) with N-RNA template; this interaction positions the polymerase on the template.

In terms of biological role, essential cofactor of the RNA polymerase L that plays a central role in the transcription and replication by forming the polymerase complex with RNA polymerase L and recruiting L to the genomic N-RNA template for RNA synthesis. Also plays a central role in the encapsidation of nascent RNA chains by forming the encapsidation complex with the nucleocapsid protein N (N-P complex). Acts as a chaperone for newly synthesized free N protein, so-called N0, allowing encapsidation of nascent RNA chains during replication. The nucleoprotein protein N prevents excessive phosphorylation of P, which leads to down-regulation of viral transcription/ replication. Participates, together with N, in the formation of viral factories (viroplasms), which are large inclusions in the host cytoplasm where replication takes place. Recruits host PI4KB and remodel the host endoplasmic reticulum membrane to form viral replication factories. This chain is Phosphoprotein (P/C), found in Homo sapiens (Human).